The sequence spans 216 residues: Guanylate kinase (216 aa).

Positions 15 to 193 (GNLFMVVAPS…ALKQLQNVVH (179 aa)) constitute a Guanylate kinase-like domain. Residue 22-29 (APSGAGKS) participates in ATP binding.

This sequence belongs to the guanylate kinase family.

Its subcellular location is the cytoplasm. The catalysed reaction is GMP + ATP = GDP + ADP. Essential for recycling GMP and indirectly, cGMP. This chain is Guanylate kinase, found in Cupriavidus metallidurans (strain ATCC 43123 / DSM 2839 / NBRC 102507 / CH34) (Ralstonia metallidurans).